The following is a 410-amino-acid chain: Ribosomal protein S6 kinase-related protein (410 aa).

One can recognise a Protein kinase domain in the interval 107–274 (LKILGLVAKG…GTLQYMAPEV (168 aa)). Residues 113-121 (VAKGSFGTV) and K136 contribute to the ATP site. D229 (proton acceptor) is an active-site residue.

The protein belongs to the protein kinase superfamily. Ser/Thr protein kinase family.

The enzyme catalyses L-seryl-[protein] + ATP = O-phospho-L-seryl-[protein] + ADP + H(+). It catalyses the reaction L-threonyl-[protein] + ATP = O-phospho-L-threonyl-[protein] + ADP + H(+). The protein is Ribosomal protein S6 kinase-related protein of Homo sapiens (Human).